A 216-amino-acid polypeptide reads, in one-letter code: Probable GTP-binding protein EngB (216 aa).

The EngB-type G domain occupies 24-205 (QTPELAFVGR…WARIASAATD (182 aa)). GTP-binding positions include 32-39 (GRSNVGKS), 59-63 (GRTRA), 86-89 (DLPG), 153-156 (TKMD), and 184-186 (FSA). Mg(2+) contacts are provided by S39 and T61.

The protein belongs to the TRAFAC class TrmE-Era-EngA-EngB-Septin-like GTPase superfamily. EngB GTPase family. It depends on Mg(2+) as a cofactor.

Functionally, necessary for normal cell division and for the maintenance of normal septation. This chain is Probable GTP-binding protein EngB, found in Anaeromyxobacter sp. (strain Fw109-5).